Here is a 321-residue protein sequence, read N- to C-terminus: Epiphycan (321 aa).

The first 19 residues, 1–19 (MKALARLIVGLLILDAAVT), serve as a signal peptide directing secretion. Thr60 carries an O-linked (GalNAc...) threonine glycan. O-linked (Xyl...) (dermatan sulfate) serine glycosylation occurs at Ser64. A disordered region spans residues 64–100 (SGNRELLTPPPQPEEAEEEEEEESTPRLIDGSSPQEP). The span at 77–86 (EEAEEEEEEE) shows a compositional bias: acidic residues. Residue Ser95 is glycosylated (O-linked (GalNAc...) serine). The region spanning 105–142 (VLGPQTNEDFPTCLLCTCISTTVYCDDHELDAIPPLPK) is the LRRNT domain. The cysteines at positions 117 and 129 are disulfide-linked. LRR repeat units follow at residues 143-164 (NTAY…DFAS), 167-188 (DLRR…AFRK), 191-212 (QLRE…PTTL), 237-257 (DLHH…PLPE), and 258-279 (NLRA…TFCN). A disulfide bridge connects residues Cys278 and Cys311. Asn282 is a glycosylation site (N-linked (GlcNAc...) asparagine). The stretch at 289–309 (ALEDIRLDGNPINLSKTPQAY) is one LRR 6 repeat.

It belongs to the small leucine-rich proteoglycan (SLRP) family. SLRP class III subfamily. A long and a short form present in approximately equimolar amounts may arise by proteolysis or cleavage by exopeptidases. In terms of processing, the O-linked polysaccharides on Thr-60 and Ser-95 are probably the mucin type linked to GalNAc. There is one glycosaminoglycan chain, known to be dermatan sulfate, and it is probably the O-glycosylation at Ser-64. Preferentially expressed in the zone of flattened chondrocytes of the developing limb cartilage.

The protein resides in the secreted. Its subcellular location is the extracellular space. The protein localises to the extracellular matrix. Functionally, may have a role in bone formation and also in establishing the ordered structure of cartilage through matrix organization. This Bos taurus (Bovine) protein is Epiphycan (EPYC).